The primary structure comprises 705 residues: Prolyl endopeptidase (705 aa).

Residues 1–20 form the signal peptide; sequence MKYNKLSVAVAAFAFAAVSA. Active-site charge relay system residues include Ser556 and His675.

The protein belongs to the peptidase S9A family. Monomer.

Its subcellular location is the periplasm. It carries out the reaction Hydrolysis of Pro-|-Xaa &gt;&gt; Ala-|-Xaa in oligopeptides.. Its function is as follows. Cleaves peptide bonds on the C-terminal side of prolyl residues within peptides that are up to approximately 30 amino acids long. Has an absolute requirement for an X-Pro bond in the trans configuration immediately preceding the Pro-Y scissible bond. The chain is Prolyl endopeptidase (f1pep1) from Elizabethkingia meningoseptica (Chryseobacterium meningosepticum).